A 792-amino-acid polypeptide reads, in one-letter code: Starch synthase 2, chloroplastic/amyloplastic (792 aa).

The transit peptide at Met-1 to Lys-55 directs the protein to the chloroplast. The interval Ile-105–Leu-295 is disordered. The span at Gly-145 to Ser-156 shows a compositional bias: polar residues. The segment covering Ser-179–Pro-192 has biased composition (low complexity). Residues Ser-221–Val-233 are compositionally biased toward polar residues. The span at Lys-266–Pro-275 shows a compositional bias: basic and acidic residues. Lys-315 contributes to the ADP-alpha-D-glucose binding site.

This sequence belongs to the glycosyltransferase 1 family. Bacterial/plant glycogen synthase subfamily. Expressed in roots, leaves and flowers.

The protein resides in the plastid. Its subcellular location is the chloroplast. The protein localises to the amyloplast. It carries out the reaction [(1-&gt;4)-alpha-D-glucosyl](n) + ADP-alpha-D-glucose = [(1-&gt;4)-alpha-D-glucosyl](n+1) + ADP + H(+). The protein operates within glycan biosynthesis; starch biosynthesis. In terms of biological role, involved in the synthesis of glycan chains within amylopectin in leaves. Is required to produce chains with a degree of polymerization of 12 to 25 (DP12-DP25). This chain is Starch synthase 2, chloroplastic/amyloplastic (SS2), found in Arabidopsis thaliana (Mouse-ear cress).